A 223-amino-acid polypeptide reads, in one-letter code: Cutinase 4 (223 aa).

The first 26 residues, 1-26 (MPLPLLPPLLLPLEALLDLALHLVDS), serve as a signal peptide directing secretion. Cysteines 60 and 133 form a disulfide. The active-site Nucleophile is the serine 144. The cysteines at positions 187 and 194 are disulfide-linked. Residue aspartate 191 is part of the active site. Catalysis depends on histidine 203, which acts as the Proton donor/acceptor.

The protein belongs to the cutinase family. Post-translationally, the 2 disulfide bonds play a critical role in holding the catalytic residues in juxta-position; reduction of the disulfide bridges results in the complete inactivation of the enzyme.

The protein localises to the secreted. The enzyme catalyses cutin + H2O = cutin monomers.. Functionally, catalyzes the hydrolysis of complex carboxylic polyesters found in the cell wall of plants. Degrades cutin, a macromolecule that forms the structure of the plant cuticle. Also degrades suberin, a specialized macromolecule found in the cell wall of various plant tissues. The protein is Cutinase 4 of Emericella nidulans (strain FGSC A4 / ATCC 38163 / CBS 112.46 / NRRL 194 / M139) (Aspergillus nidulans).